Here is a 254-residue protein sequence, read N- to C-terminus: Probable pectate lyase E (254 aa).

The signal sequence occupies residues 1-17; the sequence is MLQSLLLLPLFLTSAFA. Asparagine 175 is a glycosylation site (N-linked (GlcNAc...) asparagine). The tract at residues 228 to 254 is disordered; the sequence is NNNGKEPKKKSSGPSKACEYNQPLKKC.

The protein belongs to the polysaccharide lyase 3 family. Requires Ca(2+) as cofactor.

It is found in the secreted. It catalyses the reaction Eliminative cleavage of (1-&gt;4)-alpha-D-galacturonan to give oligosaccharides with 4-deoxy-alpha-D-galact-4-enuronosyl groups at their non-reducing ends.. Pectinolytic enzyme consist of four classes of enzymes: pectin lyase, polygalacturonase, pectin methylesterase and rhamnogalacturonase. Among pectinolytic enzymes, pectin lyase is the most important in depolymerization of pectin, since it cleaves internal glycosidic bonds of highly methylated pectins. Favors pectate, the anion, over pectin, the methyl ester. This Aspergillus clavatus (strain ATCC 1007 / CBS 513.65 / DSM 816 / NCTC 3887 / NRRL 1 / QM 1276 / 107) protein is Probable pectate lyase E (plyE).